The sequence spans 240 residues: Protein unc-119 homolog A (240 aa).

A compositionally biased stretch (gly residues) spans 1 to 12 (MKVKKGGGGTGP). Residues 1 to 62 (MKVKKGGGGT…PLQGKQPIGP (62 aa)) are disordered. Phosphoserine; by CK2 is present on residues serine 37, serine 39, and serine 41. Position 131 (tyrosine 131) interacts with tetradecanoate.

Belongs to the PDE6D/unc-119 family. Interacts with CABP4; in the absence of calcium. May interact with GTP-bound ARL1. Interacts with ARL2 and ARL3 (GTP-bound forms); this promotes the release of myristoylated cargo proteins. Found in a complex with ARL3, RP2 and UNC119; RP2 induces hydrolysis of GTP ARL3 in the complex, leading to the release of UNC119. Interacts with NPHP3 (when myristoylated). Interacts with CYS1 (when myristoylated). Interacts with MACIR; interaction only takes place when UNC119 is not liganded with myristoylated proteins. Interacts with ARL1 and ARL3 GTP-bound forms. Interacts with ARL2. Interacts with ARL2. Interacts with LCK; this interaction plays a crucial role in activation of LCK. Interacts with FYN. Interacts with RAB11A; in a cell cycle-dependent manner. Interacts with LYN (via SH2 and SH3 domains); leading to LYN activation. Interacts with DNM1; leading to a decrease of DNM1 GTPase activity. Found in a complex with ABL1, ABL2, CRK and UNC119; leading to the inhibition of CRK phosphorylation by ABL kinases. Interacts with CD44. Interacts with KLHL18 (via kelch repeats). Interacts with PPP3CA, PPP3CB and PPP3CC. Interacts with USP48; this interaction promotes UNC119 stability. In terms of processing, phosphorylation suppresses its interaction with KLHL18 and down-regulates its KLHL18-mediated degradation. Phosphorylated more under light conditions than dark conditions. Dephosphorylated by calcineurin.

It localises to the cytoplasm. It is found in the cytoskeleton. The protein localises to the microtubule organizing center. The protein resides in the centrosome. Its subcellular location is the spindle. It localises to the spindle pole. Its function is as follows. Involved in synaptic functions in photoreceptor cells, the signal transduction in immune cells as a Src family kinase activator, endosome recycling, the uptake of bacteria and endocytosis, protein trafficking in sensory neurons and as lipid-binding chaperone with specificity for a diverse subset of myristoylated proteins. Specifically binds the myristoyl moiety of a subset of N-terminally myristoylated proteins and is required for their localization. Binds myristoylated GNAT1 and is required for G-protein localization and trafficking in sensory neurons. Probably plays a role in trafficking proteins in photoreceptor cells. Plays important roles in mediating Src family kinase signals for the completion of cytokinesis via RAB11A. In Rattus norvegicus (Rat), this protein is Protein unc-119 homolog A (Unc119).